Reading from the N-terminus, the 122-residue chain is uncharacterized protein (122 aa).

Over residues 1–15 (MAEPGGRGDYHKDGR) the composition is skewed to basic and acidic residues. The tract at residues 1–26 (MAEPGGRGDYHKDGRPPSLSRSPLFT) is disordered.

This is an uncharacterized protein from Macaca fascicularis (Crab-eating macaque).